The chain runs to 2367 residues: Probable G-protein coupled receptor 179 (2367 aa).

The signal sequence occupies residues 1 to 25 (MGTRGAVMPPPMWGLLGCCFVCAWA). Residues 26 to 381 (LGGPRPIRSL…CLVEEAAVLR (356 aa)) lie on the Extracellular side of the membrane. Residues 62–245 (YLYSGDAQQL…CQEGRLRPGW (184 aa)) form a cache-like region region. Residue Asn75 is glycosylated (N-linked (GlcNAc...) asparagine). Cys76 and Cys236 form a disulfide bridge. Residue Asn298 is glycosylated (N-linked (GlcNAc...) asparagine). The chain crosses the membrane as a helical span at residues 382–402 (AAVLACQACCMLAIFLSMLVS). At 403–415 (YRCRRNKRIWASG) the chain is on the cytoplasmic side. A helical membrane pass occupies residues 416–436 (VVLLETVLFGFLLLYFPVFIL). Residues 437 to 444 (YFKPSVFR) lie on the Extracellular side of the membrane. A helical transmembrane segment spans residues 445–465 (CIALRWVRLLGFAIVYGTIIL). A disulfide bridge connects residues Cys445 and Cys537. Residues 466-493 (KLYRVLQLFLSRTAQRSALLSSGRLLRR) lie on the Cytoplasmic side of the membrane. A helical membrane pass occupies residues 494–514 (LGLLLLPVLGFLAVWTVGALE). The Extracellular segment spans residues 515–543 (RGIQHAPLVIRGHTPSGRHFYLCHHDRWD). The helical transmembrane segment at 544-564 (YIMVVAELLLLCWGSFLCYAT) threads the bilayer. Residues 565–575 (RAVLSAFHEPR) are Cytoplasmic-facing. Residues 576–594 (YMGIALHNELLLSAAFHTA) traverse the membrane as a helical segment. Over 595-607 (RFVLVPSLHPDWT) the chain is Extracellular. Residues 608 to 628 (LLLFFFHTHSTVTTTLALIFI) form a helical membrane-spanning segment. At 629–2367 (PKFWKLGAPP…PPTVYPWDWE (1739 aa)) the chain is on the cytoplasmic side. 12 disordered regions span residues 731–818 (ARQH…FRSA), 869–932 (REER…PHPP), 1039–1083 (KSRA…QQGS), 1098–1198 (RSTY…AGKT), 1247–1431 (EVTE…CPWE), 1537–1557 (PRESTVPGHSSPCLDNSSSKA), 1577–1672 (DLRP…ERPQ), 1723–1757 (AIRKSPNDTGKVSADLGPRERAVTAPEKPQKPTPE), 1823–1852 (SEGTTGKGLDQKAGSESAEQREKALEKGRL), 1886–2108 (AQAP…GSVE), 2133–2212 (WEAG…KEAG), and 2308–2367 (GVRE…WDWE). The span at 738 to 759 (SGSPGHGSLPGSSRRRLLSSSL) shows a compositional bias: low complexity. Residues 773–782 (STYDQRREQD) are compositionally biased toward basic and acidic residues. Over residues 1039–1067 (KSRAGENEMDAEDAHHQREANDVDEDRPK) the composition is skewed to basic and acidic residues. Residues 1153–1164 (LQNQQNAHTSRM) show a composition bias toward polar residues. 4 stretches are compositionally biased toward basic and acidic residues: residues 1171–1181 (EGSREQEDRGR), 1277–1299 (RALRQDPGDSQKKRGEARGKSEP), 1341–1362 (GRIRDKSEAGDSVEARKVEKPG), and 1390–1407 (EDGKPAQEAVKDLPQEKQ). Residues 1615-1639 (ESQKDKEKMPGKSEIEDVTAWEKPE) are compositionally biased toward basic and acidic residues. 6 stretches are compositionally biased toward basic and acidic residues: residues 1840–1851 (AEQREKALEKGR), 1903–1920 (AEGHSLEATEKGDLRQDP), 1970–1979 (SHLDRQRPDQ), 2023–2054 (VTERIPVKGVSRQDGKGDSQEEKGRAPEKSEP), 2061–2070 (KKPEMADFRQ), and 2165–2180 (TEEHFSKAAAKPREQE). Residues 2326-2340 (PEPSLQEAESQSSSL) are compositionally biased toward low complexity.

The protein belongs to the G-protein coupled receptor 3 family. Homodimer. Associates with the R7 group RGS-GNB5 complexes, composed of an R7 group RGS subunit (RGS6, RGS7, RGS9 or RGS11) and GNB5, promoting their localization to the cell membrane and regulating the GTPase activator activity of R7 RGS proteins. Interacts with TRPM1. Interacts with GRM6. Interacts with EGFLAM; transsynaptic interaction is required for synaptic organization of photoreceptor cells. As to expression, expressed in the retina.

The protein resides in the cell membrane. Its subcellular location is the postsynaptic cell membrane. The protein localises to the cell projection. It is found in the dendrite. Functionally, orphan receptor involved in vision. Required for signal transduction through retinal depolarizing bipolar cells. Acts as an atypical G-protein coupled receptor that recruits and regulates the R7 group RGS-GNB5 complexes instead of activating G proteins: promotes the GTPase activator activity of R7 RGS proteins, increasing the GTPase activity of G protein alpha subunits, thereby driving them into their inactive GDP-bound form. Associates with components of metabotropic signaling cascade in retina ON-bipolar neurons, such as TRPM1 and GRM6: may control the ability of the GRM6 cascade to gate TRPM1. The protein is Probable G-protein coupled receptor 179 of Homo sapiens (Human).